A 275-amino-acid polypeptide reads, in one-letter code: Elongation factor Ts (275 aa).

Positions threonine 76 to valine 79 are involved in Mg(2+) ion dislocation from EF-Tu.

It belongs to the EF-Ts family.

Its subcellular location is the cytoplasm. Functionally, associates with the EF-Tu.GDP complex and induces the exchange of GDP to GTP. It remains bound to the aminoacyl-tRNA.EF-Tu.GTP complex up to the GTP hydrolysis stage on the ribosome. In Mycobacterium avium (strain 104), this protein is Elongation factor Ts.